A 239-amino-acid polypeptide reads, in one-letter code: MRSGIIAKKVGMTRLFMEDGKQIPVTVLSLDGLQVVAQRTEDKDGYTAVQLGAGSAKVKRVSKAMRGHFAASKVEPKRKLVEFRVPADGLIEVGAEISAEHFLEGQKVDVTGTSIGKGFAGAMKRWNFGGLRASHGVSISHRSHGSTGQCQDPGKVFKGKKMAGHMGAARVTTQNLEVVKTDADRGLVFIKGAVPGPKSGWVTVKDAVKKKAPEGLPFPAALKTAAEAAAEAPAEGGEA.

Q151 carries the post-translational modification N5-methylglutamine.

It belongs to the universal ribosomal protein uL3 family. In terms of assembly, part of the 50S ribosomal subunit. Forms a cluster with proteins L14 and L19. In terms of processing, methylated by PrmB.

One of the primary rRNA binding proteins, it binds directly near the 3'-end of the 23S rRNA, where it nucleates assembly of the 50S subunit. The protein is Large ribosomal subunit protein uL3 of Ruegeria sp. (strain TM1040) (Silicibacter sp.).